We begin with the raw amino-acid sequence, 475 residues long: Siroheme synthase (475 aa).

A precorrin-2 dehydrogenase /sirohydrochlorin ferrochelatase region spans residues 1 to 204 (MDYLPVFLNI…GRDQAAQDYL (204 aa)). Residues 22–23 (EI) and 43–44 (PA) contribute to the NAD(+) site. At Ser129 the chain carries Phosphoserine. Residues 218–475 (GEVYLVGAGP…MGTSSGPGYP (258 aa)) form a uroporphyrinogen-III C-methyltransferase region. Pro227 provides a ligand contact to S-adenosyl-L-methionine. Asp250 (proton acceptor) is an active-site residue. Lys272 (proton donor) is an active-site residue. Residues 303–305 (GGD), Ile308, 333–334 (TA), Met385, and Gly414 each bind S-adenosyl-L-methionine.

The protein in the N-terminal section; belongs to the precorrin-2 dehydrogenase / sirohydrochlorin ferrochelatase family. It in the C-terminal section; belongs to the precorrin methyltransferase family.

It carries out the reaction uroporphyrinogen III + 2 S-adenosyl-L-methionine = precorrin-2 + 2 S-adenosyl-L-homocysteine + H(+). It catalyses the reaction precorrin-2 + NAD(+) = sirohydrochlorin + NADH + 2 H(+). The enzyme catalyses siroheme + 2 H(+) = sirohydrochlorin + Fe(2+). Its pathway is cofactor biosynthesis; adenosylcobalamin biosynthesis; precorrin-2 from uroporphyrinogen III: step 1/1. It participates in cofactor biosynthesis; adenosylcobalamin biosynthesis; sirohydrochlorin from precorrin-2: step 1/1. The protein operates within porphyrin-containing compound metabolism; siroheme biosynthesis; precorrin-2 from uroporphyrinogen III: step 1/1. It functions in the pathway porphyrin-containing compound metabolism; siroheme biosynthesis; siroheme from sirohydrochlorin: step 1/1. Its pathway is porphyrin-containing compound metabolism; siroheme biosynthesis; sirohydrochlorin from precorrin-2: step 1/1. Functionally, multifunctional enzyme that catalyzes the SAM-dependent methylations of uroporphyrinogen III at position C-2 and C-7 to form precorrin-2 via precorrin-1. Then it catalyzes the NAD-dependent ring dehydrogenation of precorrin-2 to yield sirohydrochlorin. Finally, it catalyzes the ferrochelation of sirohydrochlorin to yield siroheme. The sequence is that of Siroheme synthase from Nitrosomonas europaea (strain ATCC 19718 / CIP 103999 / KCTC 2705 / NBRC 14298).